A 114-amino-acid polypeptide reads, in one-letter code: Mobility group protein 1A (114 aa).

Positions 5 to 71 (PKRPLSAYML…EYEKAMKEFE (67 aa)) form a DNA-binding region, HMG box. Residues 69-114 (EFERNGGDKSSGASTKKRGKAAEKKKPAKKSKKKDSEDDEEEDESD) are disordered. Over residues 105–114 (EDDEEEDESD) the composition is skewed to acidic residues.

The protein belongs to the HMGB family.

It is found in the nucleus. It localises to the chromosome. Its function is as follows. Found in condensed chromomeres. Binds preferentially to AT-rich DNA. The protein is Mobility group protein 1A (HMG1A) of Chironomus tentans (Midge).